The following is a 1331-amino-acid chain: Xanthine dehydrogenase/oxidase (1331 aa).

Positions 4-91 constitute a 2Fe-2S ferredoxin-type domain; that stretch reads DELVFFVNGK…HVAVTTVEGI (88 aa). [2Fe-2S] cluster contacts are provided by Cys43, Cys48, Cys51, Cys73, Cys112, Cys115, Cys147, and Cys149. Residues 228 to 413 form the FAD-binding PCMH-type domain; the sequence is FEGERVTWIQ…LSIEIPYSKE (186 aa). FAD contacts are provided by residues 256–263, Phe336, 346–350, Asp359, Leu403, and Lys421; these read LVVGNTEI and SIGGN. A disulfide bridge connects residues Cys535 and Cys992. Residues Gln767 and Phe798 each contribute to the Mo-molybdopterin site. Substrate contacts are provided by Glu802 and Arg880. Arg912 lines the Mo-molybdopterin pocket. Substrate contacts are provided by Phe914 and Thr1010. Ala1079 contributes to the Mo-molybdopterin binding site. Glu1261 acts as the Proton acceptor in catalysis.

This sequence belongs to the xanthine dehydrogenase family. Homodimer. Interacts with BTN1A1. It depends on [2Fe-2S] cluster as a cofactor. FAD serves as cofactor. Requires Mo-molybdopterin as cofactor. Subject to partial proteolysis; this alters the enzyme from the dehydrogenase form (D) to the oxidase form (O). Post-translationally, contains sulfhydryl groups that are easily oxidized (in vitro); this alters the enzyme from the dehydrogenase form (D) to the oxidase form (O).

The protein localises to the peroxisome. Its subcellular location is the cytoplasm. The protein resides in the secreted. The enzyme catalyses xanthine + NAD(+) + H2O = urate + NADH + H(+). The catalysed reaction is hypoxanthine + NAD(+) + H2O = xanthine + NADH + H(+). It carries out the reaction xanthine + O2 + H2O = urate + H2O2. With respect to regulation, can be converted from the dehydrogenase form (D) to the oxidase form (O) irreversibly by proteolysis or reversibly through the oxidation of sulfhydryl groups. Its function is as follows. Key enzyme in purine degradation. Catalyzes the oxidation of hypoxanthine to xanthine. Catalyzes the oxidation of xanthine to uric acid. Contributes to the generation of reactive oxygen species. This chain is Xanthine dehydrogenase/oxidase (Xdh), found in Rattus norvegicus (Rat).